Consider the following 296-residue polypeptide: Tyrosine recombinase XerC (296 aa).

Positions 2 to 85 (ADQASWLERF…ALKQFGQFLL (84 aa)) constitute a Core-binding (CB) domain. The Tyr recombinase domain maps to 106 to 285 (TLPKNLDPDS…DFQHLAKVYD (180 aa)). Active-site residues include Arg145, Lys169, His237, Arg240, and His263. The O-(3'-phospho-DNA)-tyrosine intermediate role is filled by Tyr272.

This sequence belongs to the 'phage' integrase family. XerC subfamily. Forms a cyclic heterotetrameric complex composed of two molecules of XerC and two molecules of XerD.

The protein localises to the cytoplasm. Its function is as follows. Site-specific tyrosine recombinase, which acts by catalyzing the cutting and rejoining of the recombining DNA molecules. The XerC-XerD complex is essential to convert dimers of the bacterial chromosome into monomers to permit their segregation at cell division. It also contributes to the segregational stability of plasmids. This Shewanella amazonensis (strain ATCC BAA-1098 / SB2B) protein is Tyrosine recombinase XerC.